The sequence spans 322 residues: ATP-dependent 6-phosphofructokinase (322 aa).

ATP-binding positions include Gly-12, 73-74 (RF), and 103-106 (GDGT). Asp-104 lines the Mg(2+) pocket. 126-128 (TID) provides a ligand contact to substrate. Asp-128 acts as the Proton acceptor in catalysis. Arg-155 contributes to the ADP binding site. Substrate-binding positions include Arg-163 and 170–172 (MGR). ADP contacts are provided by residues 186–188 (GSE), Lys-212, and 214–216 (KPS). Substrate contacts are provided by residues Glu-223, Arg-245, and 251–254 (HTQR).

It belongs to the phosphofructokinase type A (PFKA) family. ATP-dependent PFK group I subfamily. Prokaryotic clade 'B1' sub-subfamily. As to quaternary structure, homotetramer. Mg(2+) serves as cofactor.

It is found in the cytoplasm. It carries out the reaction beta-D-fructose 6-phosphate + ATP = beta-D-fructose 1,6-bisphosphate + ADP + H(+). The protein operates within carbohydrate degradation; glycolysis; D-glyceraldehyde 3-phosphate and glycerone phosphate from D-glucose: step 3/4. Allosterically activated by ADP and other diphosphonucleosides, and allosterically inhibited by phosphoenolpyruvate. In terms of biological role, catalyzes the phosphorylation of D-fructose 6-phosphate to fructose 1,6-bisphosphate by ATP, the first committing step of glycolysis. This chain is ATP-dependent 6-phosphofructokinase, found in Mesomycoplasma hyopneumoniae (strain J / ATCC 25934 / NCTC 10110) (Mycoplasma hyopneumoniae).